Here is a 334-residue protein sequence, read N- to C-terminus: Hemin transport system permease protein HmuU (334 aa).

9 helical membrane passes run Leu-9–Gly-29, Leu-60–Phe-80, Ala-96–Leu-116, Tyr-117–Leu-137, Leu-149–Ile-169, Trp-191–Gln-211, Ala-244–Val-264, Trp-278–Ala-298, and Glu-306–Leu-326.

It belongs to the binding-protein-dependent transport system permease family. FecCD subfamily.

It localises to the cell inner membrane. Part of the binding-protein-dependent transport system for hemin; probably responsible for the translocation of the substrate across the membrane. The chain is Hemin transport system permease protein HmuU (hmuU) from Yersinia pestis.